The primary structure comprises 225 residues: uncharacterized protein (225 aa).

This is an uncharacterized protein from Methanocaldococcus jannaschii (strain ATCC 43067 / DSM 2661 / JAL-1 / JCM 10045 / NBRC 100440) (Methanococcus jannaschii).